Reading from the N-terminus, the 422-residue chain is Aminopentol aminotransferase (422 aa).

Lys-258 is subject to N6-(pyridoxal phosphate)lysine.

Belongs to the class-III pyridoxal-phosphate-dependent aminotransferase family. Pyridoxal 5'-phosphate serves as cofactor.

The protein localises to the cytoplasm. It catalyses the reaction (2S,3S,5R,10R,12S,14S,15R,16R)-2-amino-12,16-dimethylicosane-3,5,10,14,15-pentol + pyruvate = (3S,5R,10R,12S,14S,15R,16R)-3,5,10,14,15-pentahydroxy-12,16-dimethylicosan-2-one + L-alanine. Involved in degradation of fumonisin B1. Catalyzes the deamination of aminopentol (HFB1) to 2-keto-HFB1. Pyruvate is the preferred cosubstrate, but it can also use several other alpha-keto acids as amino group acceptors. This Sphingopyxis macrogoltabida (Sphingomonas macrogoltabidus) protein is Aminopentol aminotransferase (fumI).